The following is a 259-amino-acid chain: Phosphatidylglycerol--prolipoprotein diacylglyceryl transferase (259 aa).

4 helical membrane passes run L12–A32, I46–V66, I83–V103, and V109–I129. An a 1,2-diacyl-sn-glycero-3-phospho-(1'-sn-glycerol)-binding site is contributed by R131. Transmembrane regions (helical) follow at residues V167–W187, L194–I214, and G226–F246.

The protein belongs to the Lgt family.

It is found in the cell membrane. It carries out the reaction L-cysteinyl-[prolipoprotein] + a 1,2-diacyl-sn-glycero-3-phospho-(1'-sn-glycerol) = an S-1,2-diacyl-sn-glyceryl-L-cysteinyl-[prolipoprotein] + sn-glycerol 1-phosphate + H(+). It functions in the pathway protein modification; lipoprotein biosynthesis (diacylglyceryl transfer). Catalyzes the transfer of the diacylglyceryl group from phosphatidylglycerol to the sulfhydryl group of the N-terminal cysteine of a prolipoprotein, the first step in the formation of mature lipoproteins. The protein is Phosphatidylglycerol--prolipoprotein diacylglyceryl transferase of Streptococcus equi subsp. zooepidemicus (strain MGCS10565).